The chain runs to 313 residues: Porphobilinogen deaminase (313 aa).

Position 242 is an S-(dipyrrolylmethanemethyl)cysteine (Cys-242).

The protein belongs to the HMBS family. In terms of assembly, monomer. Dipyrromethane is required as a cofactor.

It catalyses the reaction 4 porphobilinogen + H2O = hydroxymethylbilane + 4 NH4(+). It functions in the pathway porphyrin-containing compound metabolism; protoporphyrin-IX biosynthesis; coproporphyrinogen-III from 5-aminolevulinate: step 2/4. Tetrapolymerization of the monopyrrole PBG into the hydroxymethylbilane pre-uroporphyrinogen in several discrete steps. The protein is Porphobilinogen deaminase of Escherichia coli (strain SE11).